A 164-amino-acid polypeptide reads, in one-letter code: F-box protein At4g05010 (164 aa).

The segment at 38–57 is disordered; the sequence is SKRAPENDSPPVKRPSHETT. An F-box domain is found at 61–109; the sequence is RSLLETLHQDILIRVLCHVDHEDLATLKRVSKTIRKAVIEAKKSHFDYS.

In Arabidopsis thaliana (Mouse-ear cress), this protein is F-box protein At4g05010.